Reading from the N-terminus, the 287-residue chain is Ribosomal RNA small subunit methyltransferase A (287 aa).

S-adenosyl-L-methionine-binding residues include asparagine 28, leucine 30, glycine 55, glutamate 77, aspartate 103, and asparagine 123.

It belongs to the class I-like SAM-binding methyltransferase superfamily. rRNA adenine N(6)-methyltransferase family. RsmA subfamily.

Its subcellular location is the cytoplasm. The catalysed reaction is adenosine(1518)/adenosine(1519) in 16S rRNA + 4 S-adenosyl-L-methionine = N(6)-dimethyladenosine(1518)/N(6)-dimethyladenosine(1519) in 16S rRNA + 4 S-adenosyl-L-homocysteine + 4 H(+). Its function is as follows. Specifically dimethylates two adjacent adenosines (A1518 and A1519) in the loop of a conserved hairpin near the 3'-end of 16S rRNA in the 30S particle. May play a critical role in biogenesis of 30S subunits. This is Ribosomal RNA small subunit methyltransferase A from Rhodopseudomonas palustris (strain HaA2).